Reading from the N-terminus, the 31-residue chain is Cytochrome b6-f complex subunit 6 (31 aa).

The chain crosses the membrane as a helical span at residues 4–26 (ITSYFGFLLAASTITPALLIGLS).

Belongs to the PetL family. The 4 large subunits of the cytochrome b6-f complex are cytochrome b6, subunit IV (17 kDa polypeptide, PetD), cytochrome f and the Rieske protein, while the 4 small subunits are PetG, PetL, PetM and PetN. The complex functions as a dimer.

The protein localises to the plastid. It localises to the chloroplast thylakoid membrane. In terms of biological role, component of the cytochrome b6-f complex, which mediates electron transfer between photosystem II (PSII) and photosystem I (PSI), cyclic electron flow around PSI, and state transitions. PetL is important for photoautotrophic growth as well as for electron transfer efficiency and stability of the cytochrome b6-f complex. This is Cytochrome b6-f complex subunit 6 from Illicium oligandrum (Star anise).